The following is a 504-amino-acid chain: Maturase K (504 aa).

This sequence belongs to the intron maturase 2 family. MatK subfamily.

The protein resides in the plastid. Its subcellular location is the chloroplast. Usually encoded in the trnK tRNA gene intron. Probably assists in splicing its own and other chloroplast group II introns. In Chimaphila umbellata (Pipsissewa), this protein is Maturase K.